The sequence spans 266 residues: Expansin-A13 (266 aa).

The N-terminal stretch at 1 to 19 (MQRFLLPLLFLALSPPAIC) is a signal peptide. In terms of domain architecture, Expansin-like EG45 spans 58-171 (GGACGYGDLV…RRINCRKEGS (114 aa)). Positions 181 to 260 (IFISVLITNV…NWNYGQTFEG (80 aa)) constitute an Expansin-like CBD domain.

This sequence belongs to the expansin family. Expansin A subfamily.

It localises to the secreted. The protein resides in the cell wall. Its subcellular location is the membrane. Causes loosening and extension of plant cell walls by disrupting non-covalent bonding between cellulose microfibrils and matrix glucans. No enzymatic activity has been found. In Arabidopsis thaliana (Mouse-ear cress), this protein is Expansin-A13 (EXPA13).